The following is an 872-amino-acid chain: Probable LRR receptor-like serine/threonine-protein kinase At1g51880 (872 aa).

The signal sequence occupies residues 1-23 (MKSIHGFLLFLITAYVILESVQA). Over 24–513 (QDQLGFISLD…GKSKKVPMIP (490 aa)) the chain is Extracellular. Residues N40, N49, N96, N181, N255, N268, N294, N339, and N401 are each glycosylated (N-linked (GlcNAc...) asparagine). 3 LRR repeats span residues 411–434 (RIIS…SKLT), 435–457 (QLIE…FADM), and 459–482 (LLKL…IQQR). N-linked (GlcNAc...) asparagine glycans are attached at residues N464 and N472. Residues 514-534 (IVASVAGVFALLVILAIFFVV) form a helical membrane-spanning segment. Topologically, residues 535-872 (RRKNGESNKG…SASEFSPGAR (338 aa)) are cytoplasmic. Phosphothreonine is present on T557. The Protein kinase domain maps to 566–838 (NNFERVLGKG…HVVTELNECV (273 aa)). ATP is bound by residues 572 to 580 (LGKGGFGTV) and K593. Y638 is modified (phosphotyrosine). D690 acts as the Proton acceptor in catalysis. Position 724 is a phosphoserine (S724). Residues T725 and T730 each carry the phosphothreonine modification. Y738 is modified (phosphotyrosine).

Belongs to the protein kinase superfamily. Ser/Thr protein kinase family.

It localises to the membrane. It catalyses the reaction L-seryl-[protein] + ATP = O-phospho-L-seryl-[protein] + ADP + H(+). The enzyme catalyses L-threonyl-[protein] + ATP = O-phospho-L-threonyl-[protein] + ADP + H(+). The sequence is that of Probable LRR receptor-like serine/threonine-protein kinase At1g51880 from Arabidopsis thaliana (Mouse-ear cress).